A 241-amino-acid polypeptide reads, in one-letter code: Uridylate kinase (241 aa).

12–15 (KLSG) serves as a coordination point for ATP. An involved in allosteric activation by GTP region spans residues 20-25 (GATGYG). Gly-54 contacts UMP. 2 residues coordinate ATP: Gly-55 and Arg-59. Residues Asp-74 and 135–142 (TGNPYMTT) contribute to the UMP site. 3 residues coordinate ATP: Asn-163, Tyr-169, and Asp-172.

This sequence belongs to the UMP kinase family. As to quaternary structure, homohexamer.

It localises to the cytoplasm. The catalysed reaction is UMP + ATP = UDP + ADP. The protein operates within pyrimidine metabolism; CTP biosynthesis via de novo pathway; UDP from UMP (UMPK route): step 1/1. Its activity is regulated as follows. Allosterically activated by GTP. Inhibited by UTP. Its function is as follows. Catalyzes the reversible phosphorylation of UMP to UDP. The protein is Uridylate kinase of Dehalococcoides mccartyi (strain CBDB1).